Reading from the N-terminus, the 363-residue chain is Aminomethyltransferase (363 aa).

This sequence belongs to the GcvT family. The glycine cleavage system is composed of four proteins: P, T, L and H.

It catalyses the reaction N(6)-[(R)-S(8)-aminomethyldihydrolipoyl]-L-lysyl-[protein] + (6S)-5,6,7,8-tetrahydrofolate = N(6)-[(R)-dihydrolipoyl]-L-lysyl-[protein] + (6R)-5,10-methylene-5,6,7,8-tetrahydrofolate + NH4(+). Its function is as follows. The glycine cleavage system catalyzes the degradation of glycine. In Thioalkalivibrio sulfidiphilus (strain HL-EbGR7), this protein is Aminomethyltransferase.